We begin with the raw amino-acid sequence, 67 residues long: MDIIDIRSKTNDELHELLFNLRKELIDVILTKKLDKSHNHFYGSNIKKDIARILTVLSERKNEVKNV.

This sequence belongs to the universal ribosomal protein uL29 family.

This chain is Large ribosomal subunit protein uL29, found in Ehrlichia ruminantium (strain Gardel).